Here is an 840-residue protein sequence, read N- to C-terminus: DNA mismatch repair protein MutS (840 aa).

Residue 601–608 (GPNMSGKS) participates in ATP binding.

It belongs to the DNA mismatch repair MutS family.

Functionally, this protein is involved in the repair of mismatches in DNA. It is possible that it carries out the mismatch recognition step. This protein has a weak ATPase activity. In Lactococcus lactis subsp. cremoris (strain SK11), this protein is DNA mismatch repair protein MutS.